A 181-amino-acid polypeptide reads, in one-letter code: Adenine phosphoribosyltransferase (181 aa).

This sequence belongs to the purine/pyrimidine phosphoribosyltransferase family. As to quaternary structure, homodimer.

The protein resides in the cytoplasm. It catalyses the reaction AMP + diphosphate = 5-phospho-alpha-D-ribose 1-diphosphate + adenine. It functions in the pathway purine metabolism; AMP biosynthesis via salvage pathway; AMP from adenine: step 1/1. In terms of biological role, catalyzes a salvage reaction resulting in the formation of AMP, that is energically less costly than de novo synthesis. The chain is Adenine phosphoribosyltransferase from Aliivibrio fischeri (strain ATCC 700601 / ES114) (Vibrio fischeri).